A 139-amino-acid chain; its full sequence is Small ribosomal subunit protein uS12m (139 aa).

Residues 1–29 (MSWPGLLYGLTTSLSRGLALAPQLWAARS) constitute a mitochondrion transit peptide.

This sequence belongs to the universal ribosomal protein uS12 family. As to quaternary structure, component of the mitochondrial ribosome small subunit (28S) which comprises a 12S rRNA and about 30 distinct proteins.

The protein localises to the mitochondrion. In Mus musculus (Mouse), this protein is Small ribosomal subunit protein uS12m (Mrps12).